An 861-amino-acid chain; its full sequence is MASKYSVTLAAEDGYSAAFRGFAEAAEQMQENIRGHQAELRELNRLGRQMDGYQSLQGDLAATAAALDDAREKQARLSREMREAEEPSRRLQNEYDKATATVAGLSAEHRSQSNELDRLQGSLEEAGVDLSRFADEQRRIEEATRQTNSVLEDQRARMQAVSDAQARVTAAEGRVAANREARSQLRGEMVETLALGYLASRPMNSAMDMETSMADVAKVISFAEGEREQYANANLRLASDRLIASSGIRGTDIADIQYAAGQSGIFNEMEGQERFDGVMEFTRQAAIMAAAFDVSAGDAGSAMVSWRQGMNLDGDQALQLADATNHLGNNFNTTAADLTELLVRQGSVATTAGLSAEQAAALGAAFLNPGTQREVAATGFKNFILRINQGAATTDKRREQWNALGFEPEELARRMQVEAPTVIREVLQAIRAAPADEQSAITETLFGTESIGAISPLLVNLDAVDKAFNEVSDTARYSGSMLREAEGVADTSRTTWNVXTAEVARLVTQVGNGMLPVFEAVAPPVTAVIGYMADFTEANTELVGALAAGAAGLVAVKAAVLGVRYASLLIGQVGNQGALMRARLDQRTAQTALAADGAVGRLNAAINRLGGGAAGGGRNQRGNGSAAAGAAGAAGAAGAAGAAGAAGAAGAASRAAPGVQNGWRAWAANVGNSRAGQVAGKVALPVALTAGAIGVANAVGGGDAADVGSTAGGLVGGMGGFGGLMRQQMALGEEFVFSLGSGFPYSSLQRRSDGGWIEIDITYASPSSQNTGQALEQIRLSGTAFYAAGMQRLDELRAMQSERRPYVLVDGLGNNLGRWKIMSVEEQQTRVIDDGTAMKVAWVLQLEEFVDDAASSDDDSG.

A coiled-coil region spans residues 20–127 (RGFAEAAEQM…RLQGSLEEAG (108 aa)).

The protein belongs to the P2likevirus tape measure protein family.

Serves as a base for tail tube protein polymerization and acts as a template for tail length determination. The polypeptide is Probable tape measure protein (Vreelandella aquamarina (Bacteriophage phiHAP-1)).